Reading from the N-terminus, the 552-residue chain is MLHITEKEQTRGLRQLEKRGKRLLPPLIKFIWFCLISAACVAATTFYWLRLSPVHNIHKHSLNSSFEDKGEDGTLQLKHIFHHGVGEKDYKIHKRLDVTQEYLIKHSAYFQNMVNEQQQEVQEIQEIHKRHEKQEIQVKYGPDQEYNQTNTALNSVGTEYKSRLSTNEYDWPDVHRGKNPFDIQLPFKNKQSIARRIKHRNEPFFIESYLDYARSVNGDALILNRINLEWIDDDINIPNITDKDTIVTLATISSNAYVRFPQNDDDKKKSDWTDVGGGWIPDEENNDVNFGWEDVGLRGHIFVSKDNKTVVIGIKGTSGAGLPGGGSDETTKNDKTNDNLLFSCCCARVGYMWTTVCDCYEKAYTCNQDCLEKELRRKDRYYEAALDIYKNVTAIYPPETTDIWVTGHSLGGALASLLGRTYGLPTVAYEAPGEMLALKRLHLPQAPGLPRHLEHIWHIGNTADPIYMGVCNGASSSCSLGGYAMETACHTGYQCVYDVVTDYGWRVNLLNHRIHTVIDDIILVYNETAPCVYQAPCRDCFNWRFVSHDDKE.

Residues 1–26 lie on the Cytoplasmic side of the membrane; it reads MLHITEKEQTRGLRQLEKRGKRLLPP. A helical; Signal-anchor for type II membrane protein membrane pass occupies residues 27–49; sequence LIKFIWFCLISAACVAATTFYWL. The Lumenal portion of the chain corresponds to 50–552; the sequence is RLSPVHNIHK…WRFVSHDDKE (503 aa). N-linked (GlcNAc...) asparagine glycans are attached at residues N63, N147, N239, N307, and N391. Catalysis depends on S409, which acts as the Charge relay system. A glycan (N-linked (GlcNAc...) asparagine) is linked at N526.

It belongs to the AB hydrolase superfamily. Lipase family. As to quaternary structure, binds to both phosphatidylinositol (PI) and phosphatidylinositol 3,5-bisphosphate (PIP2).

It is found in the endosome. The protein localises to the multivesicular body membrane. Its subcellular location is the prevacuolar compartment membrane. The catalysed reaction is a triacylglycerol + H2O = a diacylglycerol + a fatty acid + H(+). Lipase which is essential for lysis of subvacuolar cytoplasm to vacuole targeted bodies and intravacuolar autophagic bodies. Involved in the lysis of intravacuolar multivesicular body (MVB) vesicles. The intravacuolar membrane disintegration by ATG15 is critical to life span extension. In Lodderomyces elongisporus (strain ATCC 11503 / CBS 2605 / JCM 1781 / NBRC 1676 / NRRL YB-4239) (Yeast), this protein is Putative lipase ATG15 (ATG15).